Reading from the N-terminus, the 156-residue chain is Small ribosomal subunit protein uS7 (156 aa).

It belongs to the universal ribosomal protein uS7 family. As to quaternary structure, part of the 30S ribosomal subunit. Contacts proteins S9 and S11.

Functionally, one of the primary rRNA binding proteins, it binds directly to 16S rRNA where it nucleates assembly of the head domain of the 30S subunit. Is located at the subunit interface close to the decoding center, probably blocks exit of the E-site tRNA. This Nitratidesulfovibrio vulgaris (strain DSM 19637 / Miyazaki F) (Desulfovibrio vulgaris) protein is Small ribosomal subunit protein uS7.